A 245-amino-acid polypeptide reads, in one-letter code: NAD-dependent protein deacetylase (245 aa).

One can recognise a Deacetylase sirtuin-type domain in the interval 1–245; it reads MLLLDKINEL…SIGKVLETVI (245 aa). Residues A26, T30, F37, R38, Q107, I109, D110, and H125 each coordinate NAD(+). F37 is a binding site for nicotinamide. Nicotinamide contacts are provided by I109 and D110. H125 serves as the catalytic Proton acceptor. Residues C133, C136, C155, and C158 each coordinate Zn(2+). T196, S197, N219, and I237 together coordinate NAD(+).

It belongs to the sirtuin family. Class U subfamily. The cofactor is Zn(2+).

The protein resides in the cytoplasm. The enzyme catalyses N(6)-acetyl-L-lysyl-[protein] + NAD(+) + H2O = 2''-O-acetyl-ADP-D-ribose + nicotinamide + L-lysyl-[protein]. Its function is as follows. NAD-dependent protein deacetylase which modulates the activities of several enzymes which are inactive in their acetylated form. This chain is NAD-dependent protein deacetylase, found in Clostridium acetobutylicum (strain ATCC 824 / DSM 792 / JCM 1419 / IAM 19013 / LMG 5710 / NBRC 13948 / NRRL B-527 / VKM B-1787 / 2291 / W).